The primary structure comprises 199 residues: NAD(P)H dehydrogenase (quinone) (199 aa).

Residues Val-4–Val-190 form the Flavodoxin-like domain. FMN contacts are provided by residues Ser-10–Ile-15 and Thr-78–Phe-80. An NAD(+)-binding site is contributed by Tyr-12. Trp-98 contacts substrate. FMN-binding positions include Ser-113–Gly-119 and His-134.

Belongs to the WrbA family. Requires FMN as cofactor.

The enzyme catalyses a quinone + NADH + H(+) = a quinol + NAD(+). The catalysed reaction is a quinone + NADPH + H(+) = a quinol + NADP(+). The chain is NAD(P)H dehydrogenase (quinone) from Gluconacetobacter diazotrophicus (strain ATCC 49037 / DSM 5601 / CCUG 37298 / CIP 103539 / LMG 7603 / PAl5).